A 190-amino-acid polypeptide reads, in one-letter code: Interferon alpha-9 (190 aa).

Positions 1–23 (MARPFAFLMVLVVISYWSTCSLG) are cleaved as a signal peptide. 2 disulfide bridges follow: Cys-24/Cys-122 and Cys-52/Cys-162. Asn-101 is a glycosylation site (N-linked (GlcNAc...) asparagine).

It belongs to the alpha/beta interferon family.

The protein localises to the secreted. In terms of biological role, produced by macrophages, IFN-alpha have antiviral activities. Interferon stimulates the production of two enzymes: a protein kinase and an oligoadenylate synthetase. The chain is Interferon alpha-9 (Ifna9) from Mus musculus (Mouse).